The following is a 444-amino-acid chain: Aspartate--tRNA(Asp/Asn) ligase (444 aa).

Glu-176 contributes to the L-aspartate binding site. The tract at residues 198–201 (QLFK) is aspartate. Residue Arg-220 coordinates L-aspartate. ATP is bound by residues 220-222 (RAE), 228-230 (RHL), and Glu-367. The Mg(2+) site is built by Glu-367 and Ser-370. Ser-370 and Arg-374 together coordinate L-aspartate. An ATP-binding site is contributed by 415-418 (GCER).

It belongs to the class-II aminoacyl-tRNA synthetase family. Type 2 subfamily. Homodimer. Mg(2+) is required as a cofactor.

It localises to the cytoplasm. The enzyme catalyses tRNA(Asx) + L-aspartate + ATP = L-aspartyl-tRNA(Asx) + AMP + diphosphate. Aspartyl-tRNA synthetase with relaxed tRNA specificity since it is able to aspartylate not only its cognate tRNA(Asp) but also tRNA(Asn). Reaction proceeds in two steps: L-aspartate is first activated by ATP to form Asp-AMP and then transferred to the acceptor end of tRNA(Asp/Asn). The sequence is that of Aspartate--tRNA(Asp/Asn) ligase from Methanosarcina barkeri (strain Fusaro / DSM 804).